A 294-amino-acid chain; its full sequence is Nucleotide-binding protein A2cp1_0165 (294 aa).

17–24 (GVSGSGKS) lines the ATP pocket. 68–71 (DARE) serves as a coordination point for GTP.

Belongs to the RapZ-like family.

In terms of biological role, displays ATPase and GTPase activities. In Anaeromyxobacter dehalogenans (strain 2CP-1 / ATCC BAA-258), this protein is Nucleotide-binding protein A2cp1_0165.